The sequence spans 61 residues: Large ribosomal subunit protein uL30 (61 aa).

It belongs to the universal ribosomal protein uL30 family. As to quaternary structure, part of the 50S ribosomal subunit.

The chain is Large ribosomal subunit protein uL30 from Marinomonas sp. (strain MWYL1).